The chain runs to 595 residues: Acriflavine sensitivity control protein acr-2 (595 aa).

The zn(2)-C6 fungal-type DNA-binding region spans cysteine 22 to cysteine 49. Low complexity predominate over residues threonine 69–threonine 88. The disordered stretch occupies residues threonine 69–glutamine 172. A compositionally biased stretch (polar residues) spans valine 89 to proline 117. Residues serine 118–threonine 138 are compositionally biased toward low complexity.

It localises to the nucleus. Its function is as follows. Probable transcriptional regulator. This Neurospora crassa (strain ATCC 24698 / 74-OR23-1A / CBS 708.71 / DSM 1257 / FGSC 987) protein is Acriflavine sensitivity control protein acr-2 (acr-2).